The chain runs to 91 residues: UPF0512 protein M (91 aa).

It belongs to the UPF0512 family.

This chain is UPF0512 protein M, found in Dictyostelium discoideum (Social amoeba).